Consider the following 891-residue polypeptide: DNA mismatch repair protein MutS (891 aa).

Position 634-641 (Gly-634–Ser-641) interacts with ATP.

Belongs to the DNA mismatch repair MutS family.

This protein is involved in the repair of mismatches in DNA. It is possible that it carries out the mismatch recognition step. This protein has a weak ATPase activity. This is DNA mismatch repair protein MutS from Burkholderia pseudomallei (strain 1106a).